A 419-amino-acid chain; its full sequence is Delta(8)-fatty-acid desaturase (419 aa).

The Cytochrome b5 heme-binding domain occupies 1–64; the sequence is MKSKRQALSP…LKRMPKINPS (64 aa). Residues His-24 and His-47 each contribute to the heme site. Residues 110–130 traverse the membrane as a helical segment; sequence LGVLGYFLMVQYQMYFIGAVL. Positions 143 to 147 match the Histidine box-1 motif; that stretch reads HDICH. The chain crosses the membrane as a helical span at residues 156-176; sequence WNNLVGLVFGNGLQGFSVTCW. The Histidine box-2 signature appears at 180–184; it reads HNAHH. 3 consecutive transmembrane segments (helical) span residues 226–246, 266–286, and 290–310; these read YFLV…VLTV, IGLA…MPSI, and LLVF…VVFM. The Histidine box-3 motif lies at 355 to 359; the sequence is QIEHH.

It belongs to the fatty acid desaturase type 1 family. Fe cation is required as a cofactor.

Its subcellular location is the membrane. The enzyme catalyses an (11Z,14Z)-icosadienoyl-containing glycerolipid + 2 Fe(II)-[cytochrome b5] + O2 + 2 H(+) = an (8Z,11Z,14Z)-icosatrienoyl-containing glycerolipid + 2 Fe(III)-[cytochrome b5] + 2 H2O. The catalysed reaction is an (11Z,14Z,17Z)-icosatrienoyl-containing glycerolipid + 2 Fe(II)-[cytochrome b5] + O2 + 2 H(+) = an (8Z,11Z,14Z,17Z)-eicosatetraenoyl-containing glycerolipid + 2 Fe(III)-[cytochrome b5] + 2 H2O. It carries out the reaction an (11Z)-eicosenoyl-containing glycerolipid + 2 Fe(II)-[cytochrome b5] + O2 + 2 H(+) = a (8Z,11Z)-eicosadienoyl-containing glycerolipid + 2 Fe(III)-[cytochrome b5] + 2 H2O. It participates in lipid metabolism; fatty acid metabolism. Functionally, delta(8)-fatty-acid desaturase which introduces a double bond at the 8-position in 20-carbon chain length fatty acids (C20) that have an existing delta-11 unsaturation (double bond). Whether it acts on CoA-linked substrates (as in animals) or phospholipid-linked substrates (as in plants and fungi) is still not clear. This chain is Delta(8)-fatty-acid desaturase (efd1), found in Euglena gracilis.